Reading from the N-terminus, the 436-residue chain is UPF0597 protein YhaM (436 aa).

The protein belongs to the UPF0597 family.

The chain is UPF0597 protein YhaM from Salmonella typhi.